The sequence spans 315 residues: Acetyl-coenzyme A carboxylase carboxyl transferase subunit beta, chloroplastic (315 aa).

Residues 47-315 enclose the CoA carboxyltransferase N-terminal domain; it reads LWTRCDSCEN…VYKESNSYLF (269 aa). Zn(2+)-binding residues include Cys-51, Cys-54, Cys-70, and Cys-73. The C4-type zinc-finger motif lies at 51-73; that stretch reads CDSCENMLYVRFLKQNKRICEEC.

This sequence belongs to the AccD/PCCB family. In terms of assembly, acetyl-CoA carboxylase is a heterohexamer composed of biotin carboxyl carrier protein, biotin carboxylase and 2 subunits each of ACCase subunit alpha and ACCase plastid-coded subunit beta (accD). It depends on Zn(2+) as a cofactor.

It localises to the plastid. The protein localises to the chloroplast stroma. The enzyme catalyses N(6)-carboxybiotinyl-L-lysyl-[protein] + acetyl-CoA = N(6)-biotinyl-L-lysyl-[protein] + malonyl-CoA. Its pathway is lipid metabolism; malonyl-CoA biosynthesis; malonyl-CoA from acetyl-CoA: step 1/1. In terms of biological role, component of the acetyl coenzyme A carboxylase (ACC) complex. Biotin carboxylase (BC) catalyzes the carboxylation of biotin on its carrier protein (BCCP) and then the CO(2) group is transferred by the transcarboxylase to acetyl-CoA to form malonyl-CoA. This is Acetyl-coenzyme A carboxylase carboxyl transferase subunit beta, chloroplastic from Physcomitrium patens (Spreading-leaved earth moss).